Here is a 173-residue protein sequence, read N- to C-terminus: Protein SUGARY ENHANCER 1 (173 aa).

A disordered region spans residues methionine 1–glycine 31.

Belongs to the fantastic four family.

Involved in starch metabolism in endosperm. Acts as a modifier of SUGARY1 (SU1), an isoamylase starch-debranching enzyme involved in amylopectin biosynthesis in endosperm. The polypeptide is Protein SUGARY ENHANCER 1 (Zea mays (Maize)).